Consider the following 1377-residue polypeptide: DNA-directed RNA polymerase subunit beta (1377 aa).

It belongs to the RNA polymerase beta chain family. In terms of assembly, the RNAP catalytic core consists of 2 alpha, 1 beta, 1 beta' and 1 omega subunit. When a sigma factor is associated with the core the holoenzyme is formed, which can initiate transcription.

The catalysed reaction is RNA(n) + a ribonucleoside 5'-triphosphate = RNA(n+1) + diphosphate. Its function is as follows. DNA-dependent RNA polymerase catalyzes the transcription of DNA into RNA using the four ribonucleoside triphosphates as substrates. In Aromatoleum aromaticum (strain DSM 19018 / LMG 30748 / EbN1) (Azoarcus sp. (strain EbN1)), this protein is DNA-directed RNA polymerase subunit beta.